Here is a 206-residue protein sequence, read N- to C-terminus: Sclerostin domain-containing protein 1 (206 aa).

The first 23 residues, 1–23 (MLPPAIHFYLLPLACILMKSCLA), serve as a signal peptide directing secretion. N-linked (GlcNAc...) asparagine glycosylation occurs at asparagine 47. 4 disulfide bridges follow: cysteine 75/cysteine 133, cysteine 89/cysteine 147, cysteine 100/cysteine 163, and cysteine 104/cysteine 165. Positions 75 to 170 (CRELRSTKYI…TACKCKRYTR (96 aa)) constitute a CTCK domain. The N-linked (GlcNAc...) asparagine glycan is linked to asparagine 173. The disordered stretch occupies residues 176–206 (SHNFESMSPAKPVQHHRERKRASKSSKHSMS). The span at 188 to 206 (VQHHRERKRASKSSKHSMS) shows a compositional bias: basic residues.

The protein belongs to the sclerostin family. As to quaternary structure, interacts with BMP2, BMP4, BMP6 and BMP7 with high affinity.

Its subcellular location is the secreted. Directly antagonizes activity of BMP2, BMP4, BMP6 and BMP7 in a dose-dependent manner. Enhances Wnt signaling and inhibits TGF-beta signaling. May be involved in the onset of endometrial receptivity for implantation/sensitization for the decidual cell reaction. In Pongo abelii (Sumatran orangutan), this protein is Sclerostin domain-containing protein 1 (SOSTDC1).